A 538-amino-acid polypeptide reads, in one-letter code: Pyruvate kinase (538 aa).

Residue S45 is modified to Phosphoserine. R72 contributes to the substrate binding site. Positions 74, 76, 107, and 108 each coordinate K(+). Position 74–77 (74–77 (NFSH)) interacts with ATP. ATP contacts are provided by R114 and K200. Position 265 (E265) interacts with Mg(2+). Substrate is bound by residues G288, D289, and T321. D289 is a Mg(2+) binding site.

The protein belongs to the pyruvate kinase family. Homotetramer. Mg(2+) is required as a cofactor. Requires K(+) as cofactor.

The catalysed reaction is pyruvate + ATP = phosphoenolpyruvate + ADP + H(+). It functions in the pathway carbohydrate degradation; glycolysis; pyruvate from D-glyceraldehyde 3-phosphate: step 5/5. The protein is Pyruvate kinase (pki1) of Hypocrea jecorina (Trichoderma reesei).